The sequence spans 226 residues: ATP synthase F(0) complex subunit a (226 aa).

A run of 6 helical transmembrane segments spans residues 6 to 26 (FAPFITPTVLGISVLPLIMIF), 68 to 88 (WTLMLITLIIFIASTNLLGLL), 97 to 117 (QLSMNMGMAIPLWMGTVLMGF), 138 to 158 (IPMLIIIETISLFIQPLALAV), 164 to 184 (ITAGHLLIHLIGSATLALSSI), and 193 to 213 (FTILFLLTILEFAVALIQAYV).

The protein belongs to the ATPase A chain family. Component of the ATP synthase complex composed at least of ATP5F1A/subunit alpha, ATP5F1B/subunit beta, ATP5MC1/subunit c (homooctomer), MT-ATP6/subunit a, MT-ATP8/subunit 8, ATP5ME/subunit e, ATP5MF/subunit f, ATP5MG/subunit g, ATP5MK/subunit k, ATP5MJ/subunit j, ATP5F1C/subunit gamma, ATP5F1D/subunit delta, ATP5F1E/subunit epsilon, ATP5PF/subunit F6, ATP5PB/subunit b, ATP5PD/subunit d, ATP5PO/subunit OSCP. ATP synthase complex consists of a soluble F(1) head domain (subunits alpha(3) and beta(3)) - the catalytic core - and a membrane F(0) domain - the membrane proton channel (subunits c, a, 8, e, f, g, k and j). These two domains are linked by a central stalk (subunits gamma, delta, and epsilon) rotating inside the F1 region and a stationary peripheral stalk (subunits F6, b, d, and OSCP). Interacts with DNAJC30; interaction is direct.

The protein resides in the mitochondrion inner membrane. The catalysed reaction is H(+)(in) = H(+)(out). In terms of biological role, subunit a, of the mitochondrial membrane ATP synthase complex (F(1)F(0) ATP synthase or Complex V) that produces ATP from ADP in the presence of a proton gradient across the membrane which is generated by electron transport complexes of the respiratory chain. ATP synthase complex consist of a soluble F(1) head domain - the catalytic core - and a membrane F(1) domain - the membrane proton channel. These two domains are linked by a central stalk rotating inside the F(1) region and a stationary peripheral stalk. During catalysis, ATP synthesis in the catalytic domain of F(1) is coupled via a rotary mechanism of the central stalk subunits to proton translocation. With the subunit c (ATP5MC1), forms the proton-conducting channel in the F(0) domain, that contains two crucial half-channels (inlet and outlet) that facilitate proton movement from the mitochondrial intermembrane space (IMS) into the matrix. Protons are taken up via the inlet half-channel and released through the outlet half-channel, following a Grotthuss mechanism. The sequence is that of ATP synthase F(0) complex subunit a from Ornithorhynchus anatinus (Duckbill platypus).